The sequence spans 1199 residues: DNA-directed RNA polymerase subunit beta (1199 aa).

The segment at 1175–1199 (EEKKAHEAAAQATDGKSANSTDDKK) is disordered. The segment covering 1188-1199 (DGKSANSTDDKK) has biased composition (polar residues).

This sequence belongs to the RNA polymerase beta chain family. As to quaternary structure, the RNAP catalytic core consists of 2 alpha, 1 beta, 1 beta' and 1 omega subunit. When a sigma factor is associated with the core the holoenzyme is formed, which can initiate transcription.

The catalysed reaction is RNA(n) + a ribonucleoside 5'-triphosphate = RNA(n+1) + diphosphate. Its function is as follows. DNA-dependent RNA polymerase catalyzes the transcription of DNA into RNA using the four ribonucleoside triphosphates as substrates. The sequence is that of DNA-directed RNA polymerase subunit beta from Lacticaseibacillus paracasei (strain ATCC 334 / BCRC 17002 / CCUG 31169 / CIP 107868 / KCTC 3260 / NRRL B-441) (Lactobacillus paracasei).